A 120-amino-acid polypeptide reads, in one-letter code: uncharacterized protein (120 aa).

This sequence to M.tuberculosis Rv0026 and Rv0739.

This is an uncharacterized protein from Mycobacterium tuberculosis (strain CDC 1551 / Oshkosh).